The primary structure comprises 551 residues: Palmdelphin (551 aa).

An N-acetylmethionine modification is found at methionine 1. The stretch at 12-106 (QAITDKRKIQ…LQISANEEAI (95 aa)) forms a coiled coil. A Glycyl lysine isopeptide (Lys-Gly) (interchain with G-Cter in SUMO2) cross-link involves residue lysine 125. Position 135 is a phosphoserine (serine 135). Residue lysine 178 forms a Glycyl lysine isopeptide (Lys-Gly) (interchain with G-Cter in SUMO1); alternate linkage. A Glycyl lysine isopeptide (Lys-Gly) (interchain with G-Cter in SUMO2); alternate cross-link involves residue lysine 178. Residues 247–258 (ERNSKSPTEYHE) are compositionally biased toward basic and acidic residues. Residues 247-266 (ERNSKSPTEYHEPVYANPFC) form a disordered region. Threonine 270 carries the post-translational modification Phosphothreonine. Disordered regions lie at residues 294–390 (LGNH…TCQE) and 451–533 (AEDN…GTED). Serine 321 and serine 349 each carry phosphoserine. Positions 341–353 (HTQQKRMASPWEE) are enriched in polar residues. Residues 354–365 (SSNRQNEHEVSP) are compositionally biased toward basic and acidic residues. A phosphoserine mark is found at serine 370, serine 375, serine 384, serine 385, serine 498, serine 515, and serine 520.

It belongs to the paralemmin family. In terms of assembly, interacts with GLUL. In terms of processing, phosphorylated. Ubiquitous. Expressed at highest levels in the heart and lung.

It localises to the cytoplasm. The protein resides in the cell projection. The protein localises to the dendrite. Its subcellular location is the dendritic spine. The polypeptide is Palmdelphin (Palmd) (Mus musculus (Mouse)).